Reading from the N-terminus, the 120-residue chain is Small ribosomal subunit protein bS6 (120 aa).

The interval 93 to 120 is disordered; it reads KKADTAPSSMMKTVEREEARKASQTEQA. The span at 105–120 shows a compositional bias: basic and acidic residues; it reads TVEREEARKASQTEQA.

The protein belongs to the bacterial ribosomal protein bS6 family.

In terms of biological role, binds together with bS18 to 16S ribosomal RNA. This chain is Small ribosomal subunit protein bS6, found in Delftia acidovorans (strain DSM 14801 / SPH-1).